The following is a 637-amino-acid chain: Sphingomyelin phosphodiesterase B (637 aa).

Residues 1–20 (MKVKAPILLLFVFLINFCFS) form the signal peptide. A glycan (N-linked (GlcNAc...) asparagine) is linked at asparagine 73. The Saposin B-type domain occupies 73–155 (NGTKCDICKF…GFVGFCPYVP (83 aa)). Disulfide bonds link cysteine 77/cysteine 151, cysteine 80/cysteine 145, and cysteine 108/cysteine 119. Residues asparagine 128 and asparagine 157 are each glycosylated (N-linked (GlcNAc...) asparagine). Positions 191 and 193 each coordinate Zn(2+). An intrachain disulfide couples cysteine 212 to cysteine 233. Aspartate 263 is a Zn(2+) binding site. An N-linked (GlcNAc...) asparagine glycan is attached at asparagine 279. Residue asparagine 304 participates in Zn(2+) binding. Asparagine 377 carries an N-linked (GlcNAc...) asparagine glycan. Zn(2+) is bound by residues histidine 407, histidine 441, and histidine 443. N-linked (GlcNAc...) asparagine glycosylation is found at asparagine 523 and asparagine 546. A disulfide bridge links cysteine 582 with cysteine 595. Asparagine 606 is a glycosylation site (N-linked (GlcNAc...) asparagine).

This sequence belongs to the acid sphingomyelinase family. Zn(2+) serves as cofactor.

It localises to the secreted. Functionally, converts sphingomyelin to ceramide. The protein is Sphingomyelin phosphodiesterase B (sgmB) of Dictyostelium discoideum (Social amoeba).